Reading from the N-terminus, the 430-residue chain is Glutamate-1-semialdehyde 2,1-aminomutase (430 aa).

The residue at position 265 (K265) is an N6-(pyridoxal phosphate)lysine.

Belongs to the class-III pyridoxal-phosphate-dependent aminotransferase family. HemL subfamily. Homodimer. Requires pyridoxal 5'-phosphate as cofactor.

It localises to the cytoplasm. The catalysed reaction is (S)-4-amino-5-oxopentanoate = 5-aminolevulinate. The protein operates within porphyrin-containing compound metabolism; protoporphyrin-IX biosynthesis; 5-aminolevulinate from L-glutamyl-tRNA(Glu): step 2/2. The chain is Glutamate-1-semialdehyde 2,1-aminomutase from Helicobacter pylori (strain Shi470).